The following is a 234-amino-acid chain: MSSTPDTPSRQPIRALTPIEGRVLGVLKEKQHTVPDTYPLSLNALTAGCNQKTARAPVMNVTEAEVVVAIDGLKGLSLVFEGSSSRVPRFEHNMNRVLGVPSQSAALLAMLLLRGPQTAAELRLNTVRLHAFADISSVEGFLDELAEHEPPYVVKLPRAAGEREHRWMHLLGGEINVDSFAAAGAALADESVAPSELERLRAEQRDLSNRVQRLEALVEHMASQLGIDPDALGA.

It belongs to the UPF0502 family.

The polypeptide is UPF0502 protein Reut_B4455 (Cupriavidus pinatubonensis (strain JMP 134 / LMG 1197) (Cupriavidus necator (strain JMP 134))).